The primary structure comprises 712 residues: Patatin-like phospholipase domain-containing protein AFUA_1G04970 (712 aa).

Residues 1–13 show a composition bias toward basic and acidic residues; it reads MTSDEKSATRDIY. A disordered region spans residues 1 to 20; it reads MTSDEKSATRDIYDPNTLPD. The helical transmembrane segment at 85-105 threads the bilayer; sequence WPFLFTVFAWITVLGFAYTLT. The 192-residue stretch at 275 to 466 folds into the PNPLA domain; that stretch reads LCLSGGATFA…RTDIPIKALN (192 aa). The short motif at 306-310 is the GXSXG element; the sequence is GTSGG. Ser-308 functions as the Nucleophile in the catalytic mechanism. Asp-453 serves as the catalytic Proton acceptor. The tract at residues 628 to 688 is disordered; that stretch reads RRRQDRAQEH…PDARRSSMFE (61 aa). Composition is skewed to basic and acidic residues over residues 632–646 and 652–664; these read DRAQEHADRMVERLD and RQSDYKDESHYAE. A compositionally biased stretch (polar residues) spans 667 to 676; sequence DSLSATSSRP. Basic and acidic residues predominate over residues 677–688; the sequence is HTPDARRSSMFE.

The protein belongs to the PLPL family.

The protein resides in the membrane. Probable lipid hydrolase. The protein is Patatin-like phospholipase domain-containing protein AFUA_1G04970 of Aspergillus fumigatus (strain ATCC MYA-4609 / CBS 101355 / FGSC A1100 / Af293) (Neosartorya fumigata).